The primary structure comprises 396 residues: Elongation factor Tu 1 (396 aa).

Positions 10–206 (KPHVNIGTIG…AVDEYIPTPE (197 aa)) constitute a tr-type G domain. The segment at 19–26 (GHVDHGKT) is G1. 19 to 26 (GHVDHGKT) is a binding site for GTP. Thr-26 is a Mg(2+) binding site. The G2 stretch occupies residues 60–64 (GITIN). Positions 81 to 84 (DCPG) are G3. Residues 81–85 (DCPGH) and 136–139 (NKVD) each bind GTP. The segment at 136-139 (NKVD) is G4. Residues 174-176 (SAL) are G5.

It belongs to the TRAFAC class translation factor GTPase superfamily. Classic translation factor GTPase family. EF-Tu/EF-1A subfamily. In terms of assembly, monomer.

Its subcellular location is the cytoplasm. It catalyses the reaction GTP + H2O = GDP + phosphate + H(+). Its function is as follows. GTP hydrolase that promotes the GTP-dependent binding of aminoacyl-tRNA to the A-site of ribosomes during protein biosynthesis. In Hyphomonas neptunium (strain ATCC 15444), this protein is Elongation factor Tu 1.